The following is a 215-amino-acid chain: Short neuropeptide F (215 aa).

An N-terminal signal peptide occupies residues 1–22 (MCRINFTTLSLILVLWSGSLMS). Residues 23 to 56 (EPSQNADGSIKGLYEYLLQREYAAPVSYADHQIK) constitute a propeptide that is removed on maturation. Phenylalanine amide occurs at positions 69 and 101. Tryptophan amide is present on W129. Phenylalanine amide is present on F157. A propeptide spanning residues 160-215 (SDPSWAMFNEHQLDEQQFADATRQPSKTLRGDEPTSIESTEQVESEENSPSNMDEK) is cleaved from the precursor. Residues 173 to 215 (DEQQFADATRQPSKTLRGDEPTSIESTEQVESEENSPSNMDEK) form a disordered region.

The protein belongs to the NPY family.

It localises to the secreted. In terms of biological role, plays a role in controlling food intake and regulating body size. The sequence is that of Short neuropeptide F from Aedes aegypti (Yellowfever mosquito).